The sequence spans 462 residues: GTPase Der (462 aa).

EngA-type G domains are found at residues 3 to 166 (PVIA…TTET) and 175 to 348 (IKIA…HSAI). Residues 9 to 16 (GRPNVGKS), 56 to 60 (DTGGI), 118 to 121 (NKTD), 181 to 188 (GRPNVGKS), 228 to 232 (DTAGV), and 293 to 296 (NKWD) contribute to the GTP site. The region spanning 349–433 (QSFSTPKLTR…PLKIEFKGGQ (85 aa)) is the KH-like domain.

This sequence belongs to the TRAFAC class TrmE-Era-EngA-EngB-Septin-like GTPase superfamily. EngA (Der) GTPase family. In terms of assembly, associates with the 50S ribosomal subunit.

In terms of biological role, GTPase that plays an essential role in the late steps of ribosome biogenesis. In Legionella pneumophila (strain Paris), this protein is GTPase Der.